The primary structure comprises 31 residues: Nemertide alpha-7 (31 aa).

Intrachain disulfides connect Cys2/Cys16, Cys9/Cys20, and Cys15/Cys26. Pro29 is modified (4-hydroxyproline).

It belongs to the nemertide family. Confined to the epidermis and to the mucus layer.

Its subcellular location is the secreted. Functionally, potent toxin, demonstrating strong inhibitory effects on insect sodium channels (Nav) and reduced activity on mammalian sodium channels. Potently inhibits inactivation of insect sodium channels of B.germanica (BgNav1) (EC(50)=9.5 nM). The toxin also delays the inactivation of most mammalian Nav (human Nav1.1/SCN1A; EC(50)=171.5 nM, rat Nav1.2/SCN2A; EC(50)=50.4 nM, rat Nav1.3/SCN3A; EC(50)=170.2 nM, rat Nav1.4/SCN4A; EC(50)=810.6 nM, human Nav1.5/SCN5A; EC(50)=155.6 nM, mouse Nav1.6/SCN8A; EC(50)=147.6 nM, human Nav1.9/SCN9A; EC(50)=129 nM). Inactivation is completely prevented by a concentration of 1 uM, resulting in sustained, non-inactivating currents. In addition, the toxin significantly enhances the recovery from inactivation, and the open state is not required for the toxin to interact with the channel. In vivo, injection into brine shrimp (Artemia salina) stops movement or causes death after 24 hours (EC(50)=6.1 uM). The polypeptide is Nemertide alpha-7 (Lineus ruber (Red bootlace)).